A 1503-amino-acid polypeptide reads, in one-letter code: DNA-directed RNA polymerase subunit beta' (1503 aa).

Zn(2+) is bound by residues Cys-71, Cys-73, Cys-86, and Cys-89. Mg(2+)-binding residues include Asp-470, Asp-472, and Asp-474. Zn(2+) is bound by residues Cys-800, Cys-874, Cys-881, and Cys-884.

It belongs to the RNA polymerase beta' chain family. As to quaternary structure, the RNAP catalytic core consists of 2 alpha, 1 beta, 1 beta' and 1 omega subunit. When a sigma factor is associated with the core the holoenzyme is formed, which can initiate transcription. Mg(2+) is required as a cofactor. It depends on Zn(2+) as a cofactor.

The enzyme catalyses RNA(n) + a ribonucleoside 5'-triphosphate = RNA(n+1) + diphosphate. Functionally, DNA-dependent RNA polymerase catalyzes the transcription of DNA into RNA using the four ribonucleoside triphosphates as substrates. The chain is DNA-directed RNA polymerase subunit beta' from Sulfurimonas denitrificans (strain ATCC 33889 / DSM 1251) (Thiomicrospira denitrificans (strain ATCC 33889 / DSM 1251)).